The sequence spans 357 residues: MVDAINPLGTDGFEFVEYTAADNTGIEQLKHLFSSLGFAEVAKHRSKEAWLYRQGDINFVVNAQPHSQAEEFAKVHGPSVCGMAFRVQDAASALKHALTNGAEEYKTEIGPMELSIPAVYGIGGSLLYFVDRYGKQSIYDVDFRFYDDAAQRLAKSDVGLYEIDHLTHNVKRGNMDTWAGFYERIGNFREIRYFDIEGKLTGLVSRAMTAPCGKIRIPINESSDDKSQIEEFIREYNGEGIQHIALTTDDIYQTVQTLRDRGMDFMPTPDTYYDKVDSRVEGHKEDVSRLRDLRILIDGAPLKDGILLQIFTQTVIGPVFFEIIQRKGNEGFGEGNFKALFESIEEDQIRRGVLNNA.

2 consecutive VOC domains span residues 12–132 (GFEF…FVDR) and 162–313 (EIDH…IFTQ). Residues His-165, His-243, and Glu-322 each contribute to the Fe cation site.

This sequence belongs to the 4HPPD family. The cofactor is Fe cation.

This is Hemolysin VllY (vllY) from Vibrio vulnificus (strain CMCP6).